The sequence spans 230 residues: Cytochrome c oxidase subunit 2 (230 aa).

Residues 1–14 (MAHPSQLGFQDAAS) lie on the Mitochondrial intermembrane side of the membrane. Residues 15–45 (PVMEELLHFHDHALMIVFLISTLVLYIIAAT) traverse the membrane as a helical segment. Residues 46-59 (ASTKLTDKYILDSQ) are Mitochondrial matrix-facing. Residues 60–87 (EIEVIWTIMPAVILILIALPSLRILYLM) traverse the membrane as a helical segment. The Mitochondrial intermembrane segment spans residues 88–230 (DEINDPHLTV…NWSSLMLEDA (143 aa)). Residues His161, Cys196, Glu198, Cys200, His204, and Met207 each coordinate Cu cation. Glu198 contacts Mg(2+).

This sequence belongs to the cytochrome c oxidase subunit 2 family. Component of the cytochrome c oxidase (complex IV, CIV), a multisubunit enzyme composed of 14 subunits. The complex is composed of a catalytic core of 3 subunits MT-CO1, MT-CO2 and MT-CO3, encoded in the mitochondrial DNA, and 11 supernumerary subunits COX4I, COX5A, COX5B, COX6A, COX6B, COX6C, COX7A, COX7B, COX7C, COX8 and NDUFA4, which are encoded in the nuclear genome. The complex exists as a monomer or a dimer and forms supercomplexes (SCs) in the inner mitochondrial membrane with NADH-ubiquinone oxidoreductase (complex I, CI) and ubiquinol-cytochrome c oxidoreductase (cytochrome b-c1 complex, complex III, CIII), resulting in different assemblies (supercomplex SCI(1)III(2)IV(1) and megacomplex MCI(2)III(2)IV(2)). Found in a complex with TMEM177, COA6, COX18, COX20, SCO1 and SCO2. Interacts with TMEM177 in a COX20-dependent manner. Interacts with COX20. Interacts with COX16. Cu cation serves as cofactor.

The protein resides in the mitochondrion inner membrane. The enzyme catalyses 4 Fe(II)-[cytochrome c] + O2 + 8 H(+)(in) = 4 Fe(III)-[cytochrome c] + 2 H2O + 4 H(+)(out). Functionally, component of the cytochrome c oxidase, the last enzyme in the mitochondrial electron transport chain which drives oxidative phosphorylation. The respiratory chain contains 3 multisubunit complexes succinate dehydrogenase (complex II, CII), ubiquinol-cytochrome c oxidoreductase (cytochrome b-c1 complex, complex III, CIII) and cytochrome c oxidase (complex IV, CIV), that cooperate to transfer electrons derived from NADH and succinate to molecular oxygen, creating an electrochemical gradient over the inner membrane that drives transmembrane transport and the ATP synthase. Cytochrome c oxidase is the component of the respiratory chain that catalyzes the reduction of oxygen to water. Electrons originating from reduced cytochrome c in the intermembrane space (IMS) are transferred via the dinuclear copper A center (CU(A)) of subunit 2 and heme A of subunit 1 to the active site in subunit 1, a binuclear center (BNC) formed by heme A3 and copper B (CU(B)). The BNC reduces molecular oxygen to 2 water molecules using 4 electrons from cytochrome c in the IMS and 4 protons from the mitochondrial matrix. The chain is Cytochrome c oxidase subunit 2 (mt-co2) from Tetraodon nigroviridis (Spotted green pufferfish).